We begin with the raw amino-acid sequence, 1039 residues long: Serine/threonine-protein kinase Tao (1039 aa).

Residues 27–280 enclose the Protein kinase domain; sequence FEDLREIGHG…SAKLLTHAYV (254 aa). Residues 33 to 41 and Lys-56 contribute to the ATP site; that span reads IGHGSFGAV. Asp-150 serves as the catalytic Proton acceptor. Disordered regions lie at residues 324–457, 485–508, 629–648, and 677–707; these read SAVG…NSAS, GGGG…LADR, HQQD…KKLH, and WKRE…KQHE. Over residues 341-350 the composition is skewed to polar residues; that stretch reads SSKSNSITSE. The span at 359–376 shows a compositional bias: low complexity; that stretch reads SAASSQSSSSNSIPAAAQ. Residues 377-387 show a composition bias toward basic residues; that stretch reads NHHHIAAHHHQ. Composition is skewed to low complexity over residues 388-397 and 413-429; these read QAASAAVAAA and PSGQ…VSRN. Residues 444-454 are compositionally biased toward polar residues; that stretch reads HSMNNNVTPTN. Over residues 485 to 500 the composition is skewed to gly residues; it reads GGGGTGTGGSGGGSPA. Coiled-coil stretches lie at residues 631–765 and 835–993; these read QDVE…MLLK and KQFR…DNES. Residues 677-693 are compositionally biased toward basic and acidic residues; it reads WKRELSMDESTPKRQRD.

It belongs to the protein kinase superfamily. STE Ser/Thr protein kinase family. STE20 subfamily. In terms of assembly, interacts with Schip1; the interaction enhances Tao kinase activity. Requires Mg(2+) as cofactor. Autophosphorylated. In the posterior midgut, expressed in almost all intestinal cell types including intestinal stem cells and enterocytes (at protein level). Maternally expressed, ubiquitously distributed in the egg and early embryo and enriched in the germ plasm at the posterior pole of the early embryo including the pole cells.

It is found in the cytoplasm. It localises to the cytoskeleton. Its subcellular location is the spindle. The protein resides in the membrane. The protein localises to the perikaryon. It is found in the cell cortex. It localises to the cell projection. Its subcellular location is the axon. The catalysed reaction is L-seryl-[protein] + ATP = O-phospho-L-seryl-[protein] + ADP + H(+). The enzyme catalyses L-threonyl-[protein] + ATP = O-phospho-L-threonyl-[protein] + ADP + H(+). Functionally, serine/threonine-protein kinase which regulates the Hippo/SWH (Sav/Wts/Hpo) signaling pathway, a signaling pathway that plays a pivotal role in organ size control and tumor suppression by restricting proliferation and promoting apoptosis. The core of this pathway is composed of a kinase cascade wherein Hippo (hpo), in complex with its regulatory protein Salvador (sav), phosphorylates and activates Warts (wts) in complex with its regulatory protein Mats, which in turn phosphorylates and inactivates the Yorkie (yki) oncoprotein. In imaginal cells, phosphorylates and activates hpo and leads to repression of yki. In the midgut, negatively regulates the proliferation of intestinal stem cells through the Hippo/SWH pathway. Independent of the hippo/SWH pathway, regulates epithelial morphogenesis in follicle cells by promoting the endocytosis of Fas2 and reducing lateral adhesion between epithelial cells which, in turn, permits shrinking of the lateral membrane and initiates morphogenesis of the squamous epithelium. Required for the development of both the mushroom body and the ellipsoid body in the brain and may act as a negative regulator of the par-1 kinase. Negatively regulates the JNK pathway which increases sensitivity to ethanol exposure. Plays a role in the control of cell shape by negatively regulating the growth of microtubule plus-ends as they contact the actin-rich cell cortex. Required for the induction of apoptosis in pole cells by promoting expression of skl which enhances activity of the apoptosis activator hid. Its function is as follows. Induces in vitro expression of large, highly dynamic, microtubule-dependent lamellopodia-like cytoplasmic expansions which constantly probe the environment. In terms of biological role, induces in vitro expression of actin-dependent filopodia-like cytoplasmic protrusions which firmly attach to the substrate. Antagonizes the activity of isoform D. This Drosophila melanogaster (Fruit fly) protein is Serine/threonine-protein kinase Tao.